The chain runs to 264 residues: S-adenosylmethionine decarboxylase proenzyme (264 aa).

Residue Ser-112 is the Schiff-base intermediate with substrate; via pyruvic acid of the active site. Ser-112 bears the Pyruvic acid (Ser); by autocatalysis mark. His-117 functions as the Proton acceptor; for processing activity in the catalytic mechanism. Cys-140 serves as the catalytic Proton donor; for catalytic activity.

The protein belongs to the prokaryotic AdoMetDC family. Type 2 subfamily. Heterooctamer of four alpha and four beta chains arranged as a tetramer of alpha/beta heterodimers. Pyruvate serves as cofactor. Is synthesized initially as an inactive proenzyme. Formation of the active enzyme involves a self-maturation process in which the active site pyruvoyl group is generated from an internal serine residue via an autocatalytic post-translational modification. Two non-identical subunits are generated from the proenzyme in this reaction, and the pyruvate is formed at the N-terminus of the alpha chain, which is derived from the carboxyl end of the proenzyme. The post-translation cleavage follows an unusual pathway, termed non-hydrolytic serinolysis, in which the side chain hydroxyl group of the serine supplies its oxygen atom to form the C-terminus of the beta chain, while the remainder of the serine residue undergoes an oxidative deamination to produce ammonia and the pyruvoyl group blocking the N-terminus of the alpha chain.

It catalyses the reaction S-adenosyl-L-methionine + H(+) = S-adenosyl 3-(methylsulfanyl)propylamine + CO2. The protein operates within amine and polyamine biosynthesis; S-adenosylmethioninamine biosynthesis; S-adenosylmethioninamine from S-adenosyl-L-methionine: step 1/1. Catalyzes the decarboxylation of S-adenosylmethionine to S-adenosylmethioninamine (dcAdoMet), the propylamine donor required for the synthesis of the polyamines spermine and spermidine from the diamine putrescine. This chain is S-adenosylmethionine decarboxylase proenzyme, found in Klebsiella pneumoniae (strain 342).